We begin with the raw amino-acid sequence, 246 residues long: Phycocyanobilin:ferredoxin oxidoreductase (246 aa).

This sequence belongs to the HY2 family.

It carries out the reaction (2R,3Z)-phycocyanobilin + 4 oxidized [2Fe-2S]-[ferredoxin] = biliverdin IXalpha + 4 reduced [2Fe-2S]-[ferredoxin] + 4 H(+). Its function is as follows. Catalyzes the four-electron reduction of biliverdin IX-alpha (2-electron reduction at both the A and D rings); the reaction proceeds via an isolatable 2-electron intermediate, 181,182-dihydrobiliverdin. In Synechococcus sp. (strain CC9902), this protein is Phycocyanobilin:ferredoxin oxidoreductase.